A 357-amino-acid polypeptide reads, in one-letter code: Uroporphyrinogen decarboxylase (357 aa).

Residues arginine 30 to arginine 34, aspartate 79, tyrosine 154, serine 209, and histidine 336 each bind substrate.

Belongs to the uroporphyrinogen decarboxylase family. In terms of assembly, homodimer.

Its subcellular location is the cytoplasm. The enzyme catalyses uroporphyrinogen III + 4 H(+) = coproporphyrinogen III + 4 CO2. Its pathway is porphyrin-containing compound metabolism; protoporphyrin-IX biosynthesis; coproporphyrinogen-III from 5-aminolevulinate: step 4/4. Functionally, catalyzes the decarboxylation of four acetate groups of uroporphyrinogen-III to yield coproporphyrinogen-III. This chain is Uroporphyrinogen decarboxylase, found in Mycobacterium bovis (strain ATCC BAA-935 / AF2122/97).